Reading from the N-terminus, the 146-residue chain is Large ribosomal subunit protein uL11 (146 aa).

It belongs to the universal ribosomal protein uL11 family. In terms of assembly, part of the ribosomal stalk of the 50S ribosomal subunit. Interacts with L10 and the large rRNA to form the base of the stalk. L10 forms an elongated spine to which L12 dimers bind in a sequential fashion forming a multimeric L10(L12)X complex. Post-translationally, one or more lysine residues are methylated.

Forms part of the ribosomal stalk which helps the ribosome interact with GTP-bound translation factors. The protein is Large ribosomal subunit protein uL11 of Wolbachia pipientis wMel.